Reading from the N-terminus, the 507-residue chain is Ribosomal protein uS12 methylthiotransferase RimO (507 aa).

Residues 13–124 enclose the MTTase N-terminal domain; sequence RRVALLTLGC…ISDRLGAVLA (112 aa). Cys22, Cys58, and Cys87 together coordinate [4Fe-4S] cluster. A disordered region spans residues 150 to 175; it reads AAVSLPGHGTRAAAAGPGGRSAPVEV. Positions 155–172 are enriched in low complexity; it reads PGHGTRAAAAGPGGRSAP. One can recognise a Radical SAM core domain in the interval 191–422; that stretch reads LDTGPVASLK…ALADELCAQR (232 aa). Residues Cys205, Cys209, and Cys212 each coordinate [4Fe-4S] cluster. Positions 424–497 constitute a TRAM domain; it reads EQRLGSTVQV…GVDLVAVPDG (74 aa).

The protein belongs to the methylthiotransferase family. RimO subfamily. [4Fe-4S] cluster serves as cofactor.

It localises to the cytoplasm. The enzyme catalyses L-aspartate(89)-[ribosomal protein uS12]-hydrogen + (sulfur carrier)-SH + AH2 + 2 S-adenosyl-L-methionine = 3-methylsulfanyl-L-aspartate(89)-[ribosomal protein uS12]-hydrogen + (sulfur carrier)-H + 5'-deoxyadenosine + L-methionine + A + S-adenosyl-L-homocysteine + 2 H(+). Catalyzes the methylthiolation of an aspartic acid residue of ribosomal protein uS12. This Salinispora arenicola (strain CNS-205) protein is Ribosomal protein uS12 methylthiotransferase RimO.